A 208-amino-acid chain; its full sequence is Large ribosomal subunit protein bL25 (208 aa).

This sequence belongs to the bacterial ribosomal protein bL25 family. CTC subfamily. Part of the 50S ribosomal subunit; part of the 5S rRNA/L5/L18/L25 subcomplex. Contacts the 5S rRNA. Binds to the 5S rRNA independently of L5 and L18.

Its function is as follows. This is one of the proteins that binds to the 5S RNA in the ribosome where it forms part of the central protuberance. The protein is Large ribosomal subunit protein bL25 of Bartonella quintana (strain Toulouse) (Rochalimaea quintana).